The chain runs to 140 residues: Protein archease (140 aa).

Ca(2+)-binding residues include Asp-11, Asp-139, and Leu-140.

It belongs to the archease family.

Functionally, activates the tRNA-splicing ligase complex by facilitating the enzymatic turnover of catalytic subunit RtcB. Acts by promoting the guanylylation of RtcB, a key intermediate step in tRNA ligation. Can also alter the NTP specificity of RtcB such that ATP, dGTP or ITP is used efficiently. This is Protein archease from Methanopyrus kandleri (strain AV19 / DSM 6324 / JCM 9639 / NBRC 100938).